A 746-amino-acid polypeptide reads, in one-letter code: MSERRIHSVSMDLAGRTLTLETGRFAEQANGAVVVRYGDTMLLATAVASKEPRTDTDFFPLTVDYEEKMYAAGKIPGSFFKREGKPTEGAILTARLTDRPLRPLFPEGYRNEVQIIVTTFSIDMVNDPAPLSIIAASAALAISDIPFLGPVGAVQVGYIDGALQINPPMPNMANSDLDLVVAGTKEAVLMVEAGANELPEEVMLEAVIQGHQVCKQICDLQNELVKLAGRPKKEFVPPPVDTSLEEAIQQWLGNRLYEAITDANKMVRDAQTEALKREVIAHFTADEPEEELEARTAAVSAAFENILYEEVRRMILERGERVDGRGPKDIRPISVEVGLIPRVHGSGLFTRGQTQVLTLATLGSPAEEQRLDDLGIETAKRYIHHYNFPPFSTGEIRRLGSPRRRDIGHGALAERSLLAVLPPKEEFPYTMRLVSETLSSNGSSSMASVCGSSLALMDAGVPIRAPVAGIAMGLITGKDGRWRVLTDIQGIEDHLGDMDFKVAGTAKGITGLQMDIKTTGITYEIMREAFAQAREGRLHVLEKMNAVISEPRKELSPYAPRIITLQINPEKIGALIGPGGKTIRSITEATGAQIDIEEDGRVYISTADAAAAQQAVAMVEALTREIKVGDIFLGKVVRIMPFGAFVNLAPGKDGMVHVSELDVGRVENVEDVIKMGDEINVMVIGIEPGTGKVSLSRRALLTGETAEDRRAAGAGRGLRDGGRSSGSERSGDRSPRSDDRPRPRRR.

Residues Asp-493 and Asp-499 each contribute to the Mg(2+) site. The 60-residue stretch at 560-619 folds into the KH domain; the sequence is PRIITLQINPEKIGALIGPGGKTIRSITEATGAQIDIEEDGRVYISTADAAAAQQAVAMV. An S1 motif domain is found at 629–698; it reads GDIFLGKVVR…GTGKVSLSRR (70 aa). The segment at 704-746 is disordered; it reads ETAEDRRAAGAGRGLRDGGRSSGSERSGDRSPRSDDRPRPRRR. Composition is skewed to basic and acidic residues over residues 706-722 and 729-746; these read AEDR…RDGG and RSGD…PRRR.

It belongs to the polyribonucleotide nucleotidyltransferase family. It depends on Mg(2+) as a cofactor.

It is found in the cytoplasm. The enzyme catalyses RNA(n+1) + phosphate = RNA(n) + a ribonucleoside 5'-diphosphate. In terms of biological role, involved in mRNA degradation. Catalyzes the phosphorolysis of single-stranded polyribonucleotides processively in the 3'- to 5'-direction. The chain is Polyribonucleotide nucleotidyltransferase from Roseiflexus castenholzii (strain DSM 13941 / HLO8).